A 562-amino-acid chain; its full sequence is Ycf55-like protein (562 aa).

Positions 7 to 125 (TIVIVDEDPV…DLVTGLKQVH (119 aa)) constitute a Response regulatory domain.

It belongs to the ycf55 family.

This chain is Ycf55-like protein, found in Synechocystis sp. (strain ATCC 27184 / PCC 6803 / Kazusa).